We begin with the raw amino-acid sequence, 530 residues long: Calcium-dependent protein kinase 14 (530 aa).

The N-myristoyl glycine moiety is linked to residue Gly2. The region spanning Tyr54–Ile312 is the Protein kinase domain. ATP-binding positions include Leu60–Thr68 and Lys83. Asp178 functions as the Proton acceptor in the catalytic mechanism. Residue Ser218 is modified to Phosphoserine. Positions Ala318–Ile348 are autoinhibitory domain. EF-hand domains follow at residues Glu355 to Val390, Val391 to Leu426, Gly427 to Thr462, and Thr463 to Trp498. Residues Asp368, Ser370, Lys374, Glu379, Asp404, Asp406, Asp408, Tyr410, Glu415, Asp440, Asn442, Ser444, Tyr446, Glu451, Asp476, Asn478, Asp480, and Lys482 each contribute to the Ca(2+) site. Ser484 is modified (phosphoserine). Glu487 is a Ca(2+) binding site.

It belongs to the protein kinase superfamily. Ser/Thr protein kinase family. CDPK subfamily.

Its subcellular location is the membrane. The catalysed reaction is L-seryl-[protein] + ATP = O-phospho-L-seryl-[protein] + ADP + H(+). The enzyme catalyses L-threonyl-[protein] + ATP = O-phospho-L-threonyl-[protein] + ADP + H(+). Its activity is regulated as follows. Activated by calcium. Autophosphorylation may play an important role in the regulation of the kinase activity. Functionally, may play a role in signal transduction pathways that involve calcium as a second messenger. This chain is Calcium-dependent protein kinase 14 (CPK14), found in Arabidopsis thaliana (Mouse-ear cress).